We begin with the raw amino-acid sequence, 93 residues long: Integration host factor subunit beta (93 aa).

The segment at 59-93 (RVGRNPKTGQSVSLDGKFVPHFKPGKELRDRVNDD) is disordered. Residues 82–93 (PGKELRDRVNDD) show a composition bias toward basic and acidic residues.

It belongs to the bacterial histone-like protein family. Heterodimer of an alpha and a beta chain.

This protein is one of the two subunits of integration host factor, a specific DNA-binding protein that functions in genetic recombination as well as in transcriptional and translational control. This chain is Integration host factor subunit beta, found in Stutzerimonas stutzeri (strain A1501) (Pseudomonas stutzeri).